The following is a 374-amino-acid chain: Pyruvate dehydrogenase E1 component subunit beta-1, mitochondrial (374 aa).

The transit peptide at 1-34 (MLGIARRRLGSGCALGQLMQALRPAAAAAAARTY) directs the protein to the mitochondrion. Glutamate 97 provides a ligand contact to thiamine diphosphate. Isoleucine 150, alanine 198, isoleucine 199, and aspartate 201 together coordinate K(+).

As to quaternary structure, tetramer of 2 alpha and 2 beta subunits. Thiamine diphosphate serves as cofactor.

It localises to the mitochondrion matrix. The enzyme catalyses N(6)-[(R)-lipoyl]-L-lysyl-[protein] + pyruvate + H(+) = N(6)-[(R)-S(8)-acetyldihydrolipoyl]-L-lysyl-[protein] + CO2. The pyruvate dehydrogenase complex catalyzes the overall conversion of pyruvate to acetyl-CoA and CO(2). It contains multiple copies of three enzymatic components: pyruvate dehydrogenase (E1), dihydrolipoamide acetyltransferase (E2) and lipoamide dehydrogenase (E3). This chain is Pyruvate dehydrogenase E1 component subunit beta-1, mitochondrial, found in Oryza sativa subsp. japonica (Rice).